The chain runs to 290 residues: MFAFVEQRYPTLWPYIQLMRLDRPIGTLLLLWPTLWAVWIAGAGTPSLTVIVVFFLGVVIMRAAGCVINDFADRNFDGDVERTQGRPLATGALSAKQALALFGGLGLLAFGLVLFLNELTFWLSFGGLGLAVLYPFTKRFTFMPQLFLGAAFSWAIPMAFAAETGEVPEIAWLLYVANVLWTVAYDTEYAMCDREDDLKLGIKSTAILFGDADRLMIAILQALTLLALIMVGHRLGFSWPWYAGLVGMSLSFAFQHSLIRYRERWPSFHAFLNNHWAGACVFIGLYFQYF.

8 helical membrane passes run 40–60 (IAGA…GVVI), 99–119 (LALF…LNEL), 120–140 (TFWL…TKRF), 142–162 (FMPQ…AFAA), 165–185 (GEVP…TVAY), 215–235 (LMIA…GHRL), 239–259 (WPWY…HSLI), and 267–287 (SFHA…GLYF).

This sequence belongs to the UbiA prenyltransferase family. Requires Mg(2+) as cofactor.

The protein resides in the cell inner membrane. The catalysed reaction is all-trans-octaprenyl diphosphate + 4-hydroxybenzoate = 4-hydroxy-3-(all-trans-octaprenyl)benzoate + diphosphate. It functions in the pathway cofactor biosynthesis; ubiquinone biosynthesis. In terms of biological role, catalyzes the prenylation of para-hydroxybenzoate (PHB) with an all-trans polyprenyl group. Mediates the second step in the final reaction sequence of ubiquinone-8 (UQ-8) biosynthesis, which is the condensation of the polyisoprenoid side chain with PHB, generating the first membrane-bound Q intermediate 3-octaprenyl-4-hydroxybenzoate. This is 4-hydroxybenzoate octaprenyltransferase from Alcanivorax borkumensis (strain ATCC 700651 / DSM 11573 / NCIMB 13689 / SK2).